The sequence spans 85 residues: Small ribosomal subunit protein bS16 (85 aa).

This sequence belongs to the bacterial ribosomal protein bS16 family.

This chain is Small ribosomal subunit protein bS16, found in Neorickettsia sennetsu (strain ATCC VR-367 / Miyayama) (Ehrlichia sennetsu).